A 381-amino-acid polypeptide reads, in one-letter code: L-lactate dehydrogenase (381 aa).

Residues 1–380 (MIISASTDYR…SADSLVRELG (380 aa)) enclose the FMN hydroxy acid dehydrogenase domain. Y24 provides a ligand contact to substrate. S106 and Q127 together coordinate FMN. Y129 provides a ligand contact to substrate. T155 serves as a coordination point for FMN. R164 is a binding site for substrate. Residue K251 coordinates FMN. Residue H275 is the Proton acceptor of the active site. R278 serves as a coordination point for substrate. 306–330 (DSGIRTGLDVVRMIALGADSVLLGR) is a binding site for FMN.

Belongs to the FMN-dependent alpha-hydroxy acid dehydrogenase family. Homotetramer. FMN serves as cofactor.

Its subcellular location is the cell inner membrane. The enzyme catalyses (S)-lactate + A = pyruvate + AH2. Catalyzes the conversion of L-lactate to pyruvate. Is coupled to the respiratory chain. The sequence is that of L-lactate dehydrogenase from Pseudomonas paraeruginosa (strain DSM 24068 / PA7) (Pseudomonas aeruginosa (strain PA7)).